The chain runs to 529 residues: Kunitz-type protease inhibitor 1 (529 aa).

The first 35 residues, 1–35 (MAPARTMARARLAPAGIPAVALWLLCTLGLQGTQA), serve as a signal peptide directing secretion. The 84-residue stretch at 57 to 140 (GVPGFVLDTN…FAPREGFINY (84 aa)) folds into the MANSC domain. Asn-66 and Asn-235 each carry an N-linked (GlcNAc...) asparagine glycan. A BPTI/Kunitz inhibitor 1 domain is found at 250-300 (CLASNKVGRCRGSFPRWYYDPTEQICKSFVYGGCLGNKNNYLREEECILAC). 9 cysteine pairs are disulfide-bonded: Cys-250–Cys-300, Cys-259–Cys-283, Cys-275–Cys-296, Cys-335–Cys-347, Cys-342–Cys-360, Cys-354–Cys-369, Cys-391–Cys-441, Cys-400–Cys-424, and Cys-416–Cys-437. In terms of domain architecture, LDL-receptor class A spans 334-370 (TCQPTQFRCSNGCCIDSFLECDDTPNCPDASDEAACE). The 51-residue stretch at 391 to 441 (CVDLPDTGLCKESIPRWYYNPFSEHCARFTYGGCYGNKNNFEEEQQCLESC) folds into the BPTI/Kunitz inhibitor 2 domain. A glycan (N-linked (GlcNAc...) asparagine) is linked at Asn-523.

In terms of assembly, interacts with HGFAC. Interacts with TMPRSS13; the interaction promotes the phosphorylation and cell membrane localization of TMPRSS13.

Its subcellular location is the secreted. It localises to the cytoplasm. The protein localises to the cell membrane. Functionally, inhibitor of HGFAC. Inhibits serine protease activity of ST14/matriptase in vitro. Inhibits serine protease activity of TMPRSS13, via the BPTI/Kunitz inhibitor 1 domain. The sequence is that of Kunitz-type protease inhibitor 1 (SPINT1) from Homo sapiens (Human).